Here is a 25-residue protein sequence, read N- to C-terminus: Caerin-1.9 (25 aa).

Leucine 25 is modified (leucine amide).

Belongs to the frog skin active peptide (FSAP) family. Caerin subfamily. As to expression, expressed by the skin dorsal glands.

The protein resides in the secreted. Antimicrobial peptide. Adopts an alpha helical conformation which can disrupt bacterial membranes. Strongly inhibits the formation of NO by neuronal nitric oxide synthase (nNOS) at micromolar concentrations. Acts by a non-competitive mechanism, probably by binding to calcium/calmodulin and as a consequence blocking calmodulin attachment to nNOS. The polypeptide is Caerin-1.9 (Ranoidea chloris (Red-eyed tree frog)).